The primary structure comprises 139 residues: MEFSVRTIINNKVYINGENLLHAMCRHGNSLALSIIAQSINKNYQYLLNEYNREGRKCIHIAAVMHKGQVATELIIILLNFGADVNGRVLCTGDTVLHIAVYLKDYYLAEWLCRRSGININARNICRTHTISNSTEEKR.

ANK repeat units follow at residues 16 to 48, 54 to 87, and 92 to 122; these read NGEN…QYLL, EGRK…DVNG, and TGDT…NINA.

This sequence belongs to the polydnaviridae I-Kappa-B-like protein family.

Suppresses the host immune response through NF-kappa-B inactivation. Possesses ankyrin repeat domain required for NF-kappa-B binding but lack the regulatory regions required for dissociation from NF-kappa-B and degradation. Therefore, prevents host NF-kappa-B release and subsequent activation. The polypeptide is I-Kappa-B like protein N1 (N2) (Microplitis demolitor bracovirus (isolate Webb) (MdBV)).